Here is a 306-residue protein sequence, read N- to C-terminus: Acetyl-coenzyme A carboxylase carboxyl transferase subunit beta (306 aa).

Residues 25-294 (VWTKCDSCGQ…PSPDAPREAV (270 aa)) enclose the CoA carboxyltransferase N-terminal domain. Positions 29, 32, 48, and 51 each coordinate Zn(2+). The segment at 29-51 (CDSCGQVLYRAELERNLEVCPKC) adopts a C4-type zinc-finger fold. Residues 286 to 306 (SPDAPREAVVVPPVPDQDHEA) form a disordered region.

It belongs to the AccD/PCCB family. Acetyl-CoA carboxylase is a heterohexamer composed of biotin carboxyl carrier protein (AccB), biotin carboxylase (AccC) and two subunits each of ACCase subunit alpha (AccA) and ACCase subunit beta (AccD). Requires Zn(2+) as cofactor.

It is found in the cytoplasm. It catalyses the reaction N(6)-carboxybiotinyl-L-lysyl-[protein] + acetyl-CoA = N(6)-biotinyl-L-lysyl-[protein] + malonyl-CoA. The protein operates within lipid metabolism; malonyl-CoA biosynthesis; malonyl-CoA from acetyl-CoA: step 1/1. Functionally, component of the acetyl coenzyme A carboxylase (ACC) complex. Biotin carboxylase (BC) catalyzes the carboxylation of biotin on its carrier protein (BCCP) and then the CO(2) group is transferred by the transcarboxylase to acetyl-CoA to form malonyl-CoA. This Cronobacter sakazakii (strain ATCC BAA-894) (Enterobacter sakazakii) protein is Acetyl-coenzyme A carboxylase carboxyl transferase subunit beta.